We begin with the raw amino-acid sequence, 498 residues long: PHD finger protein 10 (498 aa).

Over residues 1–10 (MAAAAGPGAA) the composition is skewed to low complexity. The disordered stretch occupies residues 1-62 (MAAAAGPGAA…SSRSCETSSQ (62 aa)). At Ala2 the chain carries N-acetylalanine. A phosphoserine mark is found at Ser12, Ser36, and Ser50. Positions 89–185 (MLQEQVSEYL…HYKEYSQMQQ (97 aa)) are essential to induce neural progenitor proliferation. Residues 89 to 295 (MLQEQVSEYL…PPLDPELPAL (207 aa)) are SAY. A Glycyl lysine isopeptide (Lys-Gly) (interchain with G-Cter in SUMO2) cross-link involves residue Lys241. Ser270 is modified (phosphoserine). The segment covering 285-296 (EPPLDPELPALD) has biased composition (low complexity). The tract at residues 285-368 (EPPLDPELPA…KRSVLSKSVP (84 aa)) is disordered. An essential to induce neural progenitor proliferation region spans residues 292-334 (LPALDSDGDSDDGEDGRGDEKRKNKGTSDSSSGNVSEGESPPD). Phosphoserine occurs at positions 297, 301, 327, and 331. Residues 318 to 328 (TSDSSSGNVSE) are compositionally biased toward polar residues. The span at 345–359 (KSKDKAATPRKDGPK) shows a compositional bias: basic and acidic residues. The PHD-type 1; degenerate zinc-finger motif lies at 379–436 (ICGICLKGKESNKKGKAESLIHCSQCENSGHPSCLDMTMELVSMIKTYPWQCMECKTC). Lys385 is covalently cross-linked (Glycyl lysine isopeptide (Lys-Gly) (interchain with G-Cter in SUMO2)). The segment at 438–481 (ICGQPHHEEEMMFCDMCDRGYHTFCVGLGAIPSGRWICDCCQRA) adopts a PHD-type 2; degenerate zinc-finger fold.

It belongs to the SAYP family. As to quaternary structure, component of neural progenitors-specific chromatin remodeling complex (npBAF complex) composed of at least, ARID1A/BAF250A or ARID1B/BAF250B, SMARCD1/BAF60A, SMARCD3/BAF60C, SMARCA2/BRM/BAF190B, SMARCA4/BRG1/BAF190A, SMARCB1/BAF47, SMARCC1/BAF155, SMARCE1/BAF57, SMARCC2/BAF170, PHF10/BAF45A, ACTL6A/BAF53A and actin. Interacts with ACTL6A/BAF53A, SMARCA2/BRM/BAF190B, SMARCA4/BRG1/BAF190A and PBRM1/BAF180.

It is found in the nucleus. Its function is as follows. Involved in transcription activity regulation by chromatin remodeling. Belongs to the neural progenitors-specific chromatin remodeling complex (npBAF complex) and is required for the proliferation of neural progenitors. During neural development a switch from a stem/progenitor to a post-mitotic chromatin remodeling mechanism occurs as neurons exit the cell cycle and become committed to their adult state. The transition from proliferating neural stem/progenitor cells to post-mitotic neurons requires a switch in subunit composition of the npBAF and nBAF complexes. As neural progenitors exit mitosis and differentiate into neurons, npBAF complexes which contain ACTL6A/BAF53A and PHF10/BAF45A, are exchanged for homologous alternative ACTL6B/BAF53B and DPF1/BAF45B or DPF3/BAF45C subunits in neuron-specific complexes (nBAF). The npBAF complex is essential for the self-renewal/proliferative capacity of the multipotent neural stem cells. The nBAF complex along with CREST plays a role regulating the activity of genes essential for dendrite growth. The polypeptide is PHD finger protein 10 (PHF10) (Homo sapiens (Human)).